Reading from the N-terminus, the 59-residue chain is Large ribosomal subunit protein bL32c (59 aa).

Positions 1 to 20 (MAVPKKRTSKSKKRIRKSVW) are disordered.

The protein belongs to the bacterial ribosomal protein bL32 family.

It localises to the plastid. It is found in the chloroplast. This chain is Large ribosomal subunit protein bL32c, found in Angiopteris evecta (Mule's foot fern).